Consider the following 569-residue polypeptide: Sulfite reductase [NADPH] hemoprotein beta-component (569 aa).

[4Fe-4S] cluster is bound by residues Cys-434, Cys-440, Cys-479, and Cys-483. Residue Cys-483 coordinates siroheme.

It belongs to the nitrite and sulfite reductase 4Fe-4S domain family. Alpha(8)-beta(8). The alpha component is a flavoprotein, the beta component is a hemoprotein. It depends on siroheme as a cofactor. [4Fe-4S] cluster serves as cofactor.

It carries out the reaction hydrogen sulfide + 3 NADP(+) + 3 H2O = sulfite + 3 NADPH + 4 H(+). The protein operates within sulfur metabolism; hydrogen sulfide biosynthesis; hydrogen sulfide from sulfite (NADPH route): step 1/1. Its function is as follows. Component of the sulfite reductase complex that catalyzes the 6-electron reduction of sulfite to sulfide. This is one of several activities required for the biosynthesis of L-cysteine from sulfate. This chain is Sulfite reductase [NADPH] hemoprotein beta-component, found in Staphylococcus carnosus (strain TM300).